Here is a 123-residue protein sequence, read N- to C-terminus: cAMP-responsive element-binding protein-like 2 (123 aa).

The disordered stretch occupies residues 1–24 (MDDSKVVGGKVKKPGKRGRKPAKI). Positions 10–21 (KVKKPGKRGRKP) are enriched in basic residues. The bZIP domain occupies 23–86 (KIDLKAKLER…MAMDQGKIPS (64 aa)). Residues 29-60 (KLERSRQSARECRARKKLRYQYLEELVSSRER) form a basic motif region. The tract at residues 62–69 (ICALREEL) is leucine-zipper. A disordered region spans residues 92–123 (LTGEEQSKPQQNSSRHPKAGKTDANTNSLVGN). Residues 114–123 (DANTNSLVGN) show a composition bias toward polar residues.

This sequence belongs to the bZIP family. ATF subfamily. Interacts with CREB1; regulates CREB1 phosphorylation, stability and transcriptional activity. Phosphorylated by AMPK. In terms of tissue distribution, widely expressed with higher expression in adipose tissue, skeletal muscle, and liver (at protein level).

The protein resides in the nucleus. Functionally, probable regulator of CREB1 transcriptional activity which is involved in adipose cells differentiation. May also play a regulatory role in the cell cycle. The protein is cAMP-responsive element-binding protein-like 2 (Crebl2) of Mus musculus (Mouse).